Reading from the N-terminus, the 51-residue chain is Large ribosomal subunit protein eL39 (51 aa).

This sequence belongs to the eukaryotic ribosomal protein eL39 family.

The polypeptide is Large ribosomal subunit protein eL39 (rpl39e) (Methanocaldococcus jannaschii (strain ATCC 43067 / DSM 2661 / JAL-1 / JCM 10045 / NBRC 100440) (Methanococcus jannaschii)).